Reading from the N-terminus, the 63-residue chain is Conotoxin Vi5.1a (63 aa).

The first 22 residues, 1 to 22 (MRCVPVFIILLLLIPSAPSADA), serve as a signal peptide directing secretion. Residues 23–50 (QPKTKDDVPLASYHDNAERTLQRLWNQR) constitute a propeptide that is removed on maturation. Pro62 carries the post-translational modification Proline amide.

It belongs to the conotoxin T superfamily. In terms of processing, contains 2 disulfide bonds that can be either 'C1-C3, C2-C4' or 'C1-C4, C2-C3', since these disulfide connectivities have been observed for conotoxins with cysteine framework V (for examples, see AC P0DQQ7 and AC P81755). Expressed by the venom duct.

Its subcellular location is the secreted. This chain is Conotoxin Vi5.1a, found in Conus virgo (Virgin cone).